We begin with the raw amino-acid sequence, 374 residues long: Multicilin (374 aa).

2 disordered regions span residues 18–72 (CPNR…ALPA) and 84–105 (CSSFLGSDPPPGGDSAASQSHS). The stretch at 168-216 (EQYWKEVADQNQRALGDALIENNQLHATLTQKQEEIASLKERNLQLKEL) forms a coiled coil. The disordered stretch occupies residues 284 to 306 (LQSRDPKRLRLQPEPQSLDRRPG).

Belongs to the geminin family. In terms of assembly, heterodimer (via coiled-coil domain) with GMNN (via coiled-coil domain); targets GMNN to the nucleus. Can form homodimers (in vitro, via coiled-coil domain), but these are much less stable than the heterodimer formed with GMNN.

The protein localises to the nucleus. In terms of biological role, transcription regulator specifically required for multiciliate cell differentiation. Acts in a multiprotein complex containing E2F4 and E2F5 that binds and activates genes required for centriole biogenesis. Required for the deuterosome-mediated acentriolar pathway. Plays a role in mitotic cell cycle progression by promoting cell cycle exit. Modulates GMNN activity by reducing its affinity for CDT1. The sequence is that of Multicilin (MCIDAS) from Bos taurus (Bovine).